A 281-amino-acid chain; its full sequence is NADPH-dependent 7-cyano-7-deazaguanine reductase (281 aa).

Residue valine 89–serine 91 coordinates substrate. NADPH is bound at residue serine 91–lysine 92. The Thioimide intermediate role is filled by cysteine 188. The active-site Proton donor is the aspartate 195. Histidine 227–glutamate 228 serves as a coordination point for substrate. Residue arginine 256 to glycine 257 coordinates NADPH.

Belongs to the GTP cyclohydrolase I family. QueF type 2 subfamily. In terms of assembly, homodimer.

The protein localises to the cytoplasm. It carries out the reaction 7-aminomethyl-7-carbaguanine + 2 NADP(+) = 7-cyano-7-deazaguanine + 2 NADPH + 3 H(+). It participates in tRNA modification; tRNA-queuosine biosynthesis. In terms of biological role, catalyzes the NADPH-dependent reduction of 7-cyano-7-deazaguanine (preQ0) to 7-aminomethyl-7-deazaguanine (preQ1). This is NADPH-dependent 7-cyano-7-deazaguanine reductase from Azoarcus sp. (strain BH72).